The primary structure comprises 164 residues: Peptide deformylase (164 aa).

Residues C87 and H129 each contribute to the Fe cation site. E130 is a catalytic residue. Residue H133 coordinates Fe cation.

This sequence belongs to the polypeptide deformylase family. The cofactor is Fe(2+).

It carries out the reaction N-terminal N-formyl-L-methionyl-[peptide] + H2O = N-terminal L-methionyl-[peptide] + formate. In terms of biological role, removes the formyl group from the N-terminal Met of newly synthesized proteins. Requires at least a dipeptide for an efficient rate of reaction. N-terminal L-methionine is a prerequisite for activity but the enzyme has broad specificity at other positions. The sequence is that of Peptide deformylase from Thermotoga petrophila (strain ATCC BAA-488 / DSM 13995 / JCM 10881 / RKU-1).